The chain runs to 237 residues: Deoxyribose-phosphate aldolase (237 aa).

D94 (proton donor/acceptor) is an active-site residue. K158 functions as the Schiff-base intermediate with acetaldehyde in the catalytic mechanism. The active-site Proton donor/acceptor is the K187.

The protein belongs to the DeoC/FbaB aldolase family. DeoC type 1 subfamily.

The protein resides in the cytoplasm. It carries out the reaction 2-deoxy-D-ribose 5-phosphate = D-glyceraldehyde 3-phosphate + acetaldehyde. It functions in the pathway carbohydrate degradation; 2-deoxy-D-ribose 1-phosphate degradation; D-glyceraldehyde 3-phosphate and acetaldehyde from 2-deoxy-alpha-D-ribose 1-phosphate: step 2/2. Functionally, catalyzes a reversible aldol reaction between acetaldehyde and D-glyceraldehyde 3-phosphate to generate 2-deoxy-D-ribose 5-phosphate. This chain is Deoxyribose-phosphate aldolase, found in Lactobacillus acidophilus (strain ATCC 700396 / NCK56 / N2 / NCFM).